The primary structure comprises 1032 residues: Unconventional myosin-Ih (1032 aa).

In terms of domain architecture, Myosin motor spans 12–701 (GVQDFVLLDA…TLFATEDAFE (690 aa)). Residue 105-112 (GESGAGKT) participates in ATP binding. Serine 365 bears the Phosphoserine mark. Residues 578-600 (LSSLLETLISKEPSYIRCIKPND) are actin-binding. IQ domains lie at 704-726 (KHQLVARIQATYKRCLGRREYVK) and 727-756 (KRQAAIKLEAHWRGALARKAIQRRKWAVRI). In terms of domain architecture, TH1 spans 855–1029 (KDGYTESLNQ…NGQLTVVSVR (175 aa)).

The protein belongs to the TRAFAC class myosin-kinesin ATPase superfamily. Myosin family.

In terms of biological role, myosins are actin-based motor molecules with ATPase activity. Unconventional myosins serve in intracellular movements. Their highly divergent tails are presumed to bind to membranous compartments, which would be moved relative to actin filaments. This chain is Unconventional myosin-Ih (MYO1H), found in Homo sapiens (Human).